Reading from the N-terminus, the 293-residue chain is FAS1 domain-containing protein DEHA2G15708g (293 aa).

A signal peptide spans 1 to 18 (MKLSSILYVSVLAHLVMS). A compositionally biased stretch (basic and acidic residues) spans 76–87 (DHIGENEKREAK). Residues 76 to 126 (DHIGENEKREAKNVYNLQSLKEGLDDENDKREGNVNKPEVSEEGSNKGDKR) form a disordered region. Residues 141–290 (QNLLQSILPQ…GYIFVINDVL (150 aa)) form the FAS1 domain.

The protein localises to the vacuole. The polypeptide is FAS1 domain-containing protein DEHA2G15708g (Debaryomyces hansenii (strain ATCC 36239 / CBS 767 / BCRC 21394 / JCM 1990 / NBRC 0083 / IGC 2968) (Yeast)).